The primary structure comprises 193 residues: NAD(P)H-quinone oxidoreductase subunit I (193 aa).

4Fe-4S ferredoxin-type domains are found at residues 56 to 85 and 96 to 125; these read GRIH…VDWE and KHYS…MTEE. Residues C65, C68, C71, C75, C105, C108, C111, and C115 each contribute to the [4Fe-4S] cluster site. The disordered stretch occupies residues 174–193; that stretch reads NLPKGSQRAGQHPEDLVKAE. The segment covering 184 to 193 has biased composition (basic and acidic residues); sequence QHPEDLVKAE.

Belongs to the complex I 23 kDa subunit family. As to quaternary structure, NDH-1 is composed of at least 11 different subunits. [4Fe-4S] cluster serves as cofactor.

It localises to the cellular thylakoid membrane. It carries out the reaction a plastoquinone + NADH + (n+1) H(+)(in) = a plastoquinol + NAD(+) + n H(+)(out). It catalyses the reaction a plastoquinone + NADPH + (n+1) H(+)(in) = a plastoquinol + NADP(+) + n H(+)(out). NDH-1 shuttles electrons from an unknown electron donor, via FMN and iron-sulfur (Fe-S) centers, to quinones in the respiratory and/or the photosynthetic chain. The immediate electron acceptor for the enzyme in this species is believed to be plastoquinone. Couples the redox reaction to proton translocation, and thus conserves the redox energy in a proton gradient. This chain is NAD(P)H-quinone oxidoreductase subunit I, found in Synechocystis sp. (strain ATCC 27184 / PCC 6803 / Kazusa).